The sequence spans 231 residues: Ribosomal RNA small subunit methyltransferase G (231 aa).

S-adenosyl-L-methionine-binding positions include G75, 125-126, and R140; that span reads GE. Residues 204–213 are compositionally biased toward acidic residues; sequence AEAEEGDSPE. Residues 204–231 are disordered; sequence AEAEEGDSPEAADASRGVILELTKKNKG.

It belongs to the methyltransferase superfamily. RNA methyltransferase RsmG family.

It is found in the cytoplasm. Specifically methylates the N7 position of a guanine in 16S rRNA. In Rhodopirellula baltica (strain DSM 10527 / NCIMB 13988 / SH1), this protein is Ribosomal RNA small subunit methyltransferase G.